The sequence spans 1444 residues: RNA-directed RNA polymerase P1 (1444 aa).

Residues 156–182 (SEEIQMDESQSDKRRRKKRMEKSRPVW) form a disordered region. Positions 690-897 (LGVGFATLYQ…KTVISHISGE (208 aa)) constitute a RdRp catalytic domain.

Belongs to the reoviridae RNA-directed RNA polymerase family.

Its subcellular location is the virion. It is found in the host cytoplasm. The catalysed reaction is RNA(n) + a ribonucleoside 5'-triphosphate = RNA(n+1) + diphosphate. Its function is as follows. RNA-directed RNA polymerase that is involved in both transcription and genome replication. Together with the capping enzyme P5 and protein P7, forms an enzyme complex positioned near the channels situated at each of the five-fold vertices of the core. In Rice dwarf virus (isolate Fujian) (RDV), this protein is RNA-directed RNA polymerase P1 (S1).